The primary structure comprises 338 residues: Palmitoyltransferase ZDHHC15 (338 aa).

Over 1–20 the chain is Cytoplasmic; it reads MLAGCRVALPRGLRCCQRVL. The helical transmembrane segment at 21–41 threads the bilayer; sequence SWVPVVIISLVVLWSYYAYVW. Topologically, residues 42–56 are lumenal; it reads ELCLVTVTNPAEKAA. The helical transmembrane segment at 57 to 77 threads the bilayer; that stretch reads YLLIFHTVFLLFIWTYWKAIF. At 78 to 172 the chain is on the cytoplasmic side; sequence TPPKQPTKKF…NNCIGYSNYK (95 aa). The 51-residue stretch at 129–179 folds into the DHHC domain; sequence RFCDTCQMVKPDRCHHCSVCGMCVLKMDHHCPWVNNCIGYSNYKFFLLFLA. 7 residues coordinate Zn(2+): C131, C134, H144, C145, C148, C151, and H158. C159 acts as the S-palmitoyl cysteine intermediate in catalysis. C165 lines the Zn(2+) pocket. A helical membrane pass occupies residues 173–193; it reads FFLLFLAYAMLYCLYIGCTVF. At 194–210 the chain is on the lumenal side; that stretch reads QYFILYWTDTLSNGRAK. A helical transmembrane segment spans residues 211–234; sequence FHVLFLLFVALMFFISLMFLFGYH. At 235 to 338 the chain is on the cytoplasmic side; the sequence is CWLVSLNRTT…TSHITVHIEK (104 aa).

It belongs to the DHHC palmitoyltransferase family. In terms of processing, autopalmitoylated (in vitro).

It is found in the golgi apparatus membrane. It localises to the postsynaptic density. It carries out the reaction L-cysteinyl-[protein] + hexadecanoyl-CoA = S-hexadecanoyl-L-cysteinyl-[protein] + CoA. It catalyses the reaction L-cysteinyl-[protein] + tetradecanoyl-CoA = S-tetradecanoyl-L-cysteinyl-[protein] + CoA. The catalysed reaction is L-cysteinyl-[protein] + octadecanoyl-CoA = S-octadecanoyl-L-cysteinyl-[protein] + CoA. Its function is as follows. Palmitoyltransferase that catalyzes the addition of palmitate onto various protein substrates. Has no stringent fatty acid selectivity and in addition to palmitate can also transfer onto target proteins myristate from tetradecanoyl-CoA and stearate from octadecanoyl-CoA. May thereby regulate target proteins association and localization to membranes. In the nervous system, probably catalyzes the palmitoylation of synaptic proteins and is involved in the differentiation of dopaminergic neurons and the development of the diencephalon. The polypeptide is Palmitoyltransferase ZDHHC15 (zdhhc15) (Xenopus laevis (African clawed frog)).